The chain runs to 116 residues: Beta-2-microglobulin (116 aa).

Residues 1-19 form the signal peptide; the sequence is MRAIITFALFCVLYITVQA. In terms of domain architecture, Ig-like C1-type spans 24–111; it reads PKVQVYSHFP…RHMSNTNAYS (88 aa). Cysteines 44 and 99 form a disulfide.

The protein belongs to the beta-2-microglobulin family. As to quaternary structure, heterodimer of an alpha chain and a beta chain. Beta-2-microglobulin is the beta-chain of major histocompatibility complex class I molecules.

It is found in the secreted. In terms of biological role, component of the class I major histocompatibility complex (MHC). Involved in the presentation of peptide antigens to the immune system. This Labeobarbus intermedius (Lake tana barbels) protein is Beta-2-microglobulin (b2m).